We begin with the raw amino-acid sequence, 497 residues long: Glycerol kinase (497 aa).

T12 lines the ADP pocket. ATP contacts are provided by T12, T13, and S14. A sn-glycerol 3-phosphate-binding site is contributed by T12. R16 lines the ADP pocket. Sn-glycerol 3-phosphate-binding residues include R82, E83, Y134, and D243. 5 residues coordinate glycerol: R82, E83, Y134, D243, and Q244. T265 and G308 together coordinate ADP. The ATP site is built by T265, G308, Q312, and G411. G411 provides a ligand contact to ADP.

This sequence belongs to the FGGY kinase family.

The catalysed reaction is glycerol + ATP = sn-glycerol 3-phosphate + ADP + H(+). The protein operates within polyol metabolism; glycerol degradation via glycerol kinase pathway; sn-glycerol 3-phosphate from glycerol: step 1/1. With respect to regulation, inhibited by fructose 1,6-bisphosphate (FBP). Key enzyme in the regulation of glycerol uptake and metabolism. Catalyzes the phosphorylation of glycerol to yield sn-glycerol 3-phosphate. In Allorhizobium ampelinum (strain ATCC BAA-846 / DSM 112012 / S4) (Agrobacterium vitis (strain S4)), this protein is Glycerol kinase.